The chain runs to 422 residues: Steroid hormone receptor ERR1 (422 aa).

Residues 1 to 66 (MSSQVVGIEP…EGAGSGEQGS (66 aa)) form a disordered region. The interval 1–76 (MSSQVVGIEP…GKLVLSSLPK (76 aa)) is repressor domain. Lysine 14 is covalently cross-linked (Glycyl lysine isopeptide (Lys-Gly) (interchain with G-Cter in SUMO)). 2 positions are modified to phosphoserine: serine 19 and serine 22. Positions 76–151 (KRLCLVCGDV…VGMLKEGVRL (76 aa)) form a DNA-binding region, nuclear receptor. 2 NR C4-type zinc fingers span residues 79–99 (CLVC…CEAC) and 115–134 (CPAS…CQAC). Lysine 129, lysine 138, lysine 160, and lysine 162 each carry N6-acetyllysine; by PCAF/KAT2B. Residue lysine 189 forms a Glycyl lysine isopeptide (Lys-Gly) (interchain with G-Cter in SUMO2) linkage. The NR LBD domain maps to 192-420 (PVNALVSHLL…KLFLEMLEAM (229 aa)). Lysine 402 is covalently cross-linked (Glycyl lysine isopeptide (Lys-Gly) (interchain with G-Cter in SUMO); alternate). A Glycyl lysine isopeptide (Lys-Gly) (interchain with G-Cter in SUMO2); alternate cross-link involves residue lysine 402. Residues 402 to 422 (KLEGKVPMHKLFLEMLEAMMD) are AF-2 domain.

Belongs to the nuclear hormone receptor family. NR3 subfamily. As to quaternary structure, binds DNA as a monomer or a homodimer. Interacts (via the AF2 domain) with coactivator PPARGC1A (via the L3 motif); the interaction greatly enhances transcriptional activity of genes involved in energy metabolism. Interacts with PIAS4; the interaction enhances sumoylation. Interacts with MAPK15; promotes re-localization of ESRRA to the cytoplasm through a XPO1-dependent mechanism then inhibits ESRRA transcriptional activity. In terms of processing, phosphorylation on Ser-19 enhances sumoylation on Lys-14 increasing repression of transcriptional activity. Sumoylated with SUMO2. Main site is Lys-14 which is enhanced by phosphorylation on Ser-19, cofactor activation, and by interaction with PIAS4. Sumoylation enhances repression of transcriptional activity, but has no effect on subcellular location nor on DNA binding. Post-translationally, reversibly acetylated. Acetylation by PCAF/KAT2 at Lys-129, Lys-138, Lys-160 and Lys-162 and PCAF/KAT2 decreases transcriptional activity probably by inhibiting DNA-binding activity; deacetylation involves SIRT1 and HDAC8 and increases DNA-binding. As to expression, most highly expressed in kidney, heart, and brown adipocytes. Also found in uterus, cervix and vagina.

The protein resides in the nucleus. It localises to the cytoplasm. Its function is as follows. Binds to an ERR-alpha response element (ERRE) containing a single consensus half-site, 5'-TNAAGGTCA-3'. Can bind to the medium-chain acyl coenzyme A dehydrogenase (MCAD) response element NRRE-1 and may act as an important regulator of MCAD promoter. Binds to the C1 region of the lactoferrin gene promoter. Requires dimerization and the coactivator, PGC-1A, for full activity. The ERRalpha/PGC1alpha complex is a regulator of energy metabolism. Induces the expression of PERM1 in the skeletal muscle. This chain is Steroid hormone receptor ERR1 (Esrra), found in Mus musculus (Mouse).